Consider the following 202-residue polypeptide: 3-isopropylmalate dehydratase small subunit (202 aa).

Belongs to the LeuD family. LeuD type 1 subfamily. As to quaternary structure, heterodimer of LeuC and LeuD.

The enzyme catalyses (2R,3S)-3-isopropylmalate = (2S)-2-isopropylmalate. It participates in amino-acid biosynthesis; L-leucine biosynthesis; L-leucine from 3-methyl-2-oxobutanoate: step 2/4. Catalyzes the isomerization between 2-isopropylmalate and 3-isopropylmalate, via the formation of 2-isopropylmaleate. The protein is 3-isopropylmalate dehydratase small subunit of Nocardioides sp. (strain ATCC BAA-499 / JS614).